Consider the following 244-residue polypeptide: uncharacterized protein (244 aa).

Helical transmembrane passes span 29 to 49 and 139 to 159; these read WIPWTIFGGSFLGGWYLTQHM and LGMKLTGYPFLIHGGILATVI.

It belongs to the FMP10 family.

The protein localises to the mitochondrion membrane. This is an uncharacterized protein from Saccharomyces cerevisiae (strain ATCC 204508 / S288c) (Baker's yeast).